Reading from the N-terminus, the 184-residue chain is GTP-binding protein Rheb (184 aa).

Residue Lys-8 forms a Glycyl lysine isopeptide (Lys-Gly) (interchain with G-Cter in ubiquitin) linkage. GDP contacts are provided by Ser-16 and Val-17. Ser-16 serves as a coordination point for GTP. Residues Gly-18, Lys-19, Ser-20, Ser-21, Val-32, Tyr-35, Thr-38, Asn-119, and Asp-122 each coordinate GTP. GDP contacts are provided by Lys-19, Ser-20, and Ser-21. Ser-20 serves as a coordination point for Mg(2+). Positions Tyr-35–Phe-43 match the Effector region motif. Thr-38 is a GDP binding site. Thr-38 contacts Mg(2+). Residue Asp-122 participates in GDP binding. Residue Ser-130 is modified to Phosphoserine; by MAPKAPK5. Position 150 (Ala-150) interacts with GDP. Ala-150 lines the GTP pocket. Cys-181 bears the Cysteine methyl ester mark. The S-farnesyl cysteine moiety is linked to residue Cys-181. Residues Ser-182–Met-184 constitute a propeptide, removed in mature form.

This sequence belongs to the small GTPase superfamily. Rheb family. Associates with the mTORC1 complex (MTOR, MLST8 and RPTOR) in a guanyl nucleotide-independent manner. Interacts with TSC2. Interacts with MCRS1; the interaction maintains RHEB at the lysosome in its active GTP-bound form and prevents its interaction with the mTORC1 complex inhibitor TSC2, ensuring activation of the mTORC1 complex by RHEB. Interacts (when prenylated) with PDE6D; this promotes release from membranes. Farnesylation is important for efficiently activating mTORC1-mediated signaling. In terms of processing, polyubiquitinated in response to amino acid, promoting its interaction with MTOR and mTORC1 activation. Deubiquitination by ATXN3 promotes recruitment of the TSC-TBC complex and RHEB inactivation by TSC2. Monoubiquitinated at Lys-8 by RNF152, promoting its association with the TSC-TBC complex. Deubiquitinated at Lys-8 by USP4, promoting mTORC1 activation. Post-translationally, phosphorylation by MAPKAPK5 impairs GTP-binding and inactivation. As to expression, expressed at high levels in normal adult cortex as well as a number of peripheral tissues, including lung and intestine.

The protein resides in the endomembrane system. The protein localises to the lysosome membrane. Its subcellular location is the golgi apparatus membrane. It localises to the endoplasmic reticulum membrane. It is found in the cytoplasm. The protein resides in the cytosol. It catalyses the reaction GTP + H2O = GDP + phosphate + H(+). Alternates between an inactive form bound to GDP and an active form bound to GTP. Inactivated by the TSC-TBC complex via the GTPase activating protein (GAP) domain of TSC2. Autoinhibited by Tyr-35, which constrains the active site conformation, restricting the access of the catalytic Asp-65 to the nucleotide-binding pocket. Small GTPase that acts as an allosteric activator of the canonical mTORC1 complex, an evolutionarily conserved central nutrient sensor that stimulates anabolic reactions and macromolecule biosynthesis to promote cellular biomass generation and growth. In response to nutrients, growth factors or amino acids, specifically activates the protein kinase activity of MTOR, the catalytic component of the mTORC1 complex: acts by causing a conformational change that allows the alignment of residues in the active site of MTOR, thereby enhancing the phosphorylation of ribosomal protein S6 kinase (RPS6KB1 and RPS6KB2) and EIF4EBP1 (4E-BP1). RHEB is also required for localization of the TSC-TBC complex to lysosomal membranes. In response to starvation, RHEB is inactivated by the TSC-TBC complex, preventing activation of mTORC1. Has low intrinsic GTPase activity. The protein is GTP-binding protein Rheb of Rattus norvegicus (Rat).